The chain runs to 562 residues: MDDNKRPLYLPFAGPAILEAPLINKGSAFTEEERIFFNLEGLLPHVIETIEEQASRAYDQYKNFSNDLDKHIYLRNIQDTNETLYYRLVQNHITEMMPIIYTPTVGMACERFSKDYRRNRGLFISYANKDRIDDILNNSTRQKVKIIVVTDGERILGLGDQGIGGMGIPIGKLSLYTSCGGISPAYTLPVTLDVGTDNPHLLEDPMYMGMRSPRIGGEEYKEFVEAFMQAVNRRWPDALIQFEDFAQKNAMPLLERYKDQYCCFNDDIQGTAAVTVGSLLAACKAAKSKLSEQRITFLGAGSAGCGIAEAIVAQMVSEGISEAQARKQVFMVDRWGMLQSNMPNLLPFQQKLAQQCDDLTNWDNFSDNISLLDVVNNAKPTVLIGVSGAPGLFTEEIIKAMHSHCPRPIVFPLSNPTSRVEATPKDILHWTQGKALVATGSPFEPVVIDDTTYEIAQCNNSYIFPGIGLGVLASGAKRVSDAMLMASSRALAECSPLAIDGEGSLLPKLEDIHLVSKRIAFAVARVAIEEGHALPTTKELLTYAIEDNFWTAEYRSYKRTAF.

The active-site Proton donor is the Tyr101. Arg154 is an NAD(+) binding site. The active-site Proton acceptor is Lys172. A divalent metal cation contacts are provided by Glu243, Asp244, and Asp267. NAD(+) contacts are provided by Asp267 and Asn415.

Belongs to the malic enzymes family. In terms of assembly, homotetramer. Mg(2+) serves as cofactor. The cofactor is Mn(2+).

It carries out the reaction (S)-malate + NAD(+) = pyruvate + CO2 + NADH. The catalysed reaction is oxaloacetate + H(+) = pyruvate + CO2. The polypeptide is NAD-dependent malic enzyme (Shewanella halifaxensis (strain HAW-EB4)).